An 85-amino-acid chain; its full sequence is Cell division topological specificity factor (85 aa).

Belongs to the MinE family.

Its function is as follows. Prevents the cell division inhibition by proteins MinC and MinD at internal division sites while permitting inhibition at polar sites. This ensures cell division at the proper site by restricting the formation of a division septum at the midpoint of the long axis of the cell. The protein is Cell division topological specificity factor of Chromobacterium violaceum (strain ATCC 12472 / DSM 30191 / JCM 1249 / CCUG 213 / NBRC 12614 / NCIMB 9131 / NCTC 9757 / MK).